A 289-amino-acid polypeptide reads, in one-letter code: Protein shisa-2 homolog (289 aa).

Positions 1–27 (MWAGCHPDAASLLRLLLAALLAAGALA) are cleaved as a signal peptide. The Extracellular portion of the chain corresponds to 28–104 (SGEYCHGWLD…RADKDGPDGS (77 aa)). Residues 81 to 102 (GCDNDRQQGAGEPGRADKDGPD) form a disordered region. A helical transmembrane segment spans residues 105-125 (AVPIYVPFLIVGSVFVAFIVL). Topologically, residues 126–289 (GSLVAACCCR…EQKMYPAVTV (164 aa)) are cytoplasmic. A disordered region spans residues 162–198 (PSASTSRGSSSRQSSTAASSSSSANSGARAPPTRSQT). The segment covering 163-191 (SASTSRGSSSRQSSTAASSSSSANSGARA) has biased composition (low complexity).

This sequence belongs to the shisa family.

It localises to the endoplasmic reticulum membrane. In terms of biological role, plays an essential role in the maturation of presomitic mesoderm cells by individual attenuation of both FGF and WNT signaling. The chain is Protein shisa-2 homolog (SHISA2) from Bos taurus (Bovine).